A 290-amino-acid chain; its full sequence is Shikimate dehydrogenase (NADP(+)) (290 aa).

Residues 18-20 (SYS) and Thr66 contribute to the shikimate site. The active-site Proton acceptor is the Lys70. Residue Glu82 coordinates NADP(+). Shikimate is bound by residues Asn91 and Asp106. NADP(+)-binding positions include 130 to 134 (GSGGA) and Met229. Shikimate is bound at residue Tyr231. Gly252 provides a ligand contact to NADP(+).

The protein belongs to the shikimate dehydrogenase family. In terms of assembly, homodimer.

It carries out the reaction shikimate + NADP(+) = 3-dehydroshikimate + NADPH + H(+). It functions in the pathway metabolic intermediate biosynthesis; chorismate biosynthesis; chorismate from D-erythrose 4-phosphate and phosphoenolpyruvate: step 4/7. Functionally, involved in the biosynthesis of the chorismate, which leads to the biosynthesis of aromatic amino acids. Catalyzes the reversible NADPH linked reduction of 3-dehydroshikimate (DHSA) to yield shikimate (SA). This is Shikimate dehydrogenase (NADP(+)) from Chlorobium phaeovibrioides (strain DSM 265 / 1930) (Prosthecochloris vibrioformis (strain DSM 265)).